The primary structure comprises 769 residues: 3-O-beta-D-glucopyranosyl-beta-D-glucuronide phosphorylase (769 aa).

Aspartate 457 functions as the Proton donor in the catalytic mechanism.

Belongs to the glycosyl hydrolase 94 family. Homodimer.

Its subcellular location is the cytoplasm. It catalyses the reaction 3-O-beta-D-glucosyl-D-glucuronate + phosphate = aldehydo-D-glucuronate + alpha-D-glucose 1-phosphate. The enzyme catalyses a 3-O-beta-D-glucosyl-beta-D-glucuronoside + phosphate = a beta-D-glucuronoside + alpha-D-glucose 1-phosphate. Glycoside phosphorylase that catalyzes the reversible phosphorolysis of 3-O-beta-D-glucosyl-D-glucuronate into D-glucuronic acid and alpha-D-glucose 1-phosphate. Cannot phosphorolyze cellobionic acid and laminaribiose. In the reverse direction, using alpha-D-glucose 1-phosphate as a donor substrate, the enzyme acts on D-glucuronate and its artificial derivative p-nitrophenyl-beta-D-glucuronide. The apparent catalytic efficiency towards p-nitrophenyl-beta-D-glucuronide is approximately 5-fold higher than that towards D-glucuronic acid. Is probably involved in the metabolism of oligosaccharides containing the 3-O-beta-D-glucopyranosyl-beta-D-glucuronide structure released from bacterial and plant acidic carbohydrates. The polypeptide is 3-O-beta-D-glucopyranosyl-beta-D-glucuronide phosphorylase (Paenibacillus borealis).